Reading from the N-terminus, the 399-residue chain is MMNQDTLPNLYDLSLAEMERLMTAWGQPAYRARQIFRQLYVNLVDSPLAMTDLPLALRERLVAETRLAPLAPEQVHVADQGLTRKALFRLENGVLIESVLMIYPDRATVCVSTQAGCGMGCVFCATGTLGLLRNLSPGDIVAQVVWAAREMRRFAAERCISPSLAPPDDDSWWTPDTLEDQGSSEARSISVSRLSNIVFMGMGEPFANYDRWWRAVEILHDPRGLNMGARSMTVSTVGLIPGIRRLATETLPINLAISLHAPDDALRSALMPVNRRYPLAALLEATRDYLAATGRRVSFEYVLLQGKNDEPEHAAKLAALLHGEAGTTPLPLHLVHVNLIPWNPVPGMPLGRSERRRVLTFQRILRERGIACTVRVERGVSIAAACGQLAGARGLNVEC.

Residue glutamate 97 is the Proton acceptor of the active site. A Radical SAM core domain is found at 103-381; that stretch reads YPDRATVCVS…CTVRVERGVS (279 aa). An intrachain disulfide couples cysteine 110 to cysteine 386. [4Fe-4S] cluster contacts are provided by cysteine 117, cysteine 121, and cysteine 124. Residues 203–204, serine 235, 258–260, and asparagine 343 contribute to the S-adenosyl-L-methionine site; these read GE and SLH. Cysteine 386 functions as the S-methylcysteine intermediate in the catalytic mechanism.

Belongs to the radical SAM superfamily. RlmN family. [4Fe-4S] cluster serves as cofactor.

The protein localises to the cytoplasm. The catalysed reaction is adenosine(2503) in 23S rRNA + 2 reduced [2Fe-2S]-[ferredoxin] + 2 S-adenosyl-L-methionine = 2-methyladenosine(2503) in 23S rRNA + 5'-deoxyadenosine + L-methionine + 2 oxidized [2Fe-2S]-[ferredoxin] + S-adenosyl-L-homocysteine. It catalyses the reaction adenosine(37) in tRNA + 2 reduced [2Fe-2S]-[ferredoxin] + 2 S-adenosyl-L-methionine = 2-methyladenosine(37) in tRNA + 5'-deoxyadenosine + L-methionine + 2 oxidized [2Fe-2S]-[ferredoxin] + S-adenosyl-L-homocysteine. Specifically methylates position 2 of adenine 2503 in 23S rRNA and position 2 of adenine 37 in tRNAs. This Roseiflexus sp. (strain RS-1) protein is Probable dual-specificity RNA methyltransferase RlmN.